The sequence spans 871 residues: Scavenger receptor class F member 2 (871 aa).

The interval 1–20 (MEGAGPRGAGPARRRGAGGP) is disordered. Positions 1–43 (MEGAGPRGAGPARRRGAGGPPSPLLPSLLLLLLLWMLPDTVAP) are cleaved as a signal peptide. At 44-441 (QELNPRGRNV…ACHLETNQRK (398 aa)) the chain is on the extracellular side. EGF-like domains lie at 71 to 110 (QGDE…ANCD), 122 to 153 (CKEL…ARCE), 148 to 182 (WGAR…AQCA), 183 to 212 (SACY…RSCN), 213 to 241 (NQCA…ARCD), and 236 to 270 (FGAR…KYCR). 18 disulfide bridges follow: C75–C86, C80–C98, C100–C109, C126–C134, C128–C141, C143–C152, C156–C163, C158–C170, C172–C181, C185–C193, C187–C200, C202–C211, C215–C222, C217–C229, C231–C240, C244–C251, C246–C258, and C260–C269. N83 is a glycosylation site (N-linked (GlcNAc...) asparagine). Residues N310 and N365 are each glycosylated (N-linked (GlcNAc...) asparagine). The 32-residue stretch at 372–403 (CAFVCADCGSGHCDFQSGRCLCSPGVHGPHCN) folds into the EGF-like 7 domain. Disulfide bonds link C376-C384, C379-C391, and C393-C402. N-linked (GlcNAc...) asparagine glycosylation occurs at N403. A helical transmembrane segment spans residues 442-462 (GVMGAGALLVLLVCLLLSLLG). Residues 463–871 (CCCACRGKDP…ELGRAGAPTL (409 aa)) are Cytoplasmic-facing. Position 551 is a phosphoserine (S551). The span at 570-579 (EAPAESRDPE) shows a compositional bias: basic and acidic residues. The tract at residues 570–871 (EAPAESRDPE…ELGRAGAPTL (302 aa)) is disordered. S613 is subject to Phosphoserine. Y628 is modified (phosphotyrosine). Residues 632–643 (ARREARPARARG) are compositionally biased toward basic and acidic residues. Phosphoserine is present on residues S651, S653, S710, S718, and S742. Residues 705–725 (TPSDKSAHTVEHGSPRTRDPT) are compositionally biased toward basic and acidic residues. A compositionally biased stretch (low complexity) spans 821–831 (PPATETPGPEK). Basic residues predominate over residues 844 to 856 (KKTPIQKPPRKKS). The span at 861-871 (GELGRAGAPTL) shows a compositional bias: low complexity.

In terms of assembly, homophilic and heterophilic interaction via its extracellular domain. Interacts with SCARF1. The heterophilic interaction with SCARF1, which is stronger than the homophilic interaction with itself, is suppressed by the presence of SCARF1 ligand such as Ac-LDL. In terms of tissue distribution, predominantly expressed in endothelial cells. Expressed in heart, placenta, lung, kidney, spleen, small intestine and ovary.

Its subcellular location is the membrane. Probable adhesion protein, which mediates homophilic and heterophilic interactions. In contrast to SCARF1, it poorly mediates the binding and degradation of acetylated low density lipoprotein (Ac-LDL). This is Scavenger receptor class F member 2 (SCARF2) from Homo sapiens (Human).